Here is a 744-residue protein sequence, read N- to C-terminus: Palmitoyltransferase ZDHHC5-A (744 aa).

Gly residues predominate over residues 1 to 11; sequence MPSGSMSGGVS. Residues 1–25 are disordered; the sequence is MPSGSMSGGVSGPTSPPHPTVPSRP. Residues 1–30 are Cytoplasmic-facing; the sequence is MPSGSMSGGVSGPTSPPHPTVPSRPLRPSR. The chain crosses the membrane as a helical span at residues 31-51; it reads YVPVSAATAFLVGSTTLFFCF. The Extracellular segment spans residues 52–61; that stretch reads TCPWLSEQFS. The chain crosses the membrane as a helical span at residues 62-82; sequence VAVPIYNGVMFMFVLANFCMA. Residues 83–167 lie on the Cytoplasmic side of the membrane; the sequence is TFMDPGIFPR…IGRRNYRYFF (85 aa). Positions 121–171 constitute a DHHC domain; sequence KWCSTCRFYRPPRCSHCSVCDNCVEDFDHHCPWVNNCIGRRNYRYFFLFLL. C151 (S-palmitoyl cysteine intermediate) is an active-site residue. A helical membrane pass occupies residues 168-188; that stretch reads LFLLSLTAHIMGVFGFGLLFI. The Extracellular segment spans residues 189-208; that stretch reads LYHTQQLDRVHSAVTMAVMC. Residues 209-229 form a helical membrane-spanning segment; the sequence is VAGLFFIPVAGLTGFHVVLVA. Residues 230–744 are Cytoplasmic-facing; the sequence is RGRTTNEQVT…VGGTTYEISV (515 aa). Disordered regions lie at residues 314–523, 556–645, and 664–744; these read SLEM…PVVG, QHAV…SLSY, and SVAG…EISV. Positions 369 to 393 are enriched in polar residues; the sequence is TYSSPGKNHTALTHAYANQSSQQPG. Residues 398–413 show a composition bias toward basic and acidic residues; sequence PSLDGREGGGAERSGA. Over residues 415–428 the composition is skewed to gly residues; the sequence is RTGGGPGGPPGSGI. The segment covering 460–501 has biased composition (polar residues); the sequence is THNAPPSEATTSTSYKSLANQTPPQAARNGSLSYDSLLTPSE. Positions 571–584 are enriched in basic and acidic residues; that stretch reads PERERERLLHDSQA. Positions 585–601 are enriched in basic residues; the sequence is QHHHHHHHHHHHHRPPR. Low complexity-rich tracts occupy residues 621–630 and 689–723; these read RTRSTDTTHP and PKPS…SPAH. Residues 725-737 show a composition bias toward gly residues; the sequence is PGGGVKKVTGVGG.

This sequence belongs to the DHHC palmitoyltransferase family. ERF2/ZDHHC9 subfamily.

The protein localises to the cell membrane. The enzyme catalyses L-cysteinyl-[protein] + hexadecanoyl-CoA = S-hexadecanoyl-L-cysteinyl-[protein] + CoA. Its function is as follows. Palmitoyltransferase that catalyzes the addition of palmitate onto various protein substrates and is involved in a variety of cellular processes. This chain is Palmitoyltransferase ZDHHC5-A, found in Danio rerio (Zebrafish).